Consider the following 371-residue polypeptide: Leu/Ile/Val-binding protein homolog 1 (371 aa).

The first 23 residues, methionine 1–alanine 23, serve as a signal peptide directing secretion.

It belongs to the leucine-binding protein family.

In terms of biological role, component of an amino-acid transport system. In Brucella melitensis biotype 1 (strain ATCC 23456 / CCUG 17765 / NCTC 10094 / 16M), this protein is Leu/Ile/Val-binding protein homolog 1.